A 39-amino-acid polypeptide reads, in one-letter code: uncharacterized protein (39 aa).

Residues 18–38 (AIKVIALVVLITISAVVYLSV) form a helical membrane-spanning segment.

It is found in the membrane. This is an uncharacterized protein from Enterobacteriaceae (Bacteriophage Mu).